We begin with the raw amino-acid sequence, 639 residues long: MSQKVFISEDDEYLFGQGTHYDIYDKLGAHPSEEKGKKGFFFAVWAPNAADVHVVGDFNGWDENAHQMKRSKTGNIWTLFIPGVAIGALYKFLITAQDGRKLYKADPYANYAELRPGNASRTTDLSGFKWSDSKWYESLKGKDMNRQPIAIYECHIGSWMKHPDGTEDGFYTYRQFADRIVEYLKEMKYTHIELIGIAEHPFDGSWGYQVTGYYAPTARYGEPTDFMYLINQLHKHGIGVILDWVPAHFCPDEFGLACFDGTCIYEDPDPRKGEHPDWGTKIFNLAKPEVKNFLIANALYWIRKFHIDGLRVDAVASMLYLDYGKKDGQWVPNKYGDNKNLDAIEFFKHFNSVVRGTYPNILTIAEESTAWPKVTAPPEEDGLGFAFKWNMGWMHDFCEYMKLDPYFRQGAHYMMTFAMSYNDSENYILPLSHDEVVHLKCSMVEKMPGYKVDKYANLRVGYTYMFGHSGKKLLFMGQDFGQEREWSEKRELDWFLLENDLNRGMKDYVGKLLEIYRKYPALYEVDNDWGGFEWINADDKERSTYSFYRRASNGKDNILFVLNMTPMERKGFKVGVPFDGTYTKILDSAKECYGGSGSSVPDKIKAVKGLCDYKDYSIEFDLPPYGAEVFVFQTKKTKN.

Aspartate 313 functions as the Nucleophile in the catalytic mechanism. The Proton donor role is filled by glutamate 366.

The protein belongs to the glycosyl hydrolase 13 family. GlgB subfamily. In terms of assembly, monomer.

It catalyses the reaction Transfers a segment of a (1-&gt;4)-alpha-D-glucan chain to a primary hydroxy group in a similar glucan chain.. It participates in glycan biosynthesis; glycogen biosynthesis. In terms of biological role, catalyzes the formation of the alpha-1,6-glucosidic linkages in glycogen by scission of a 1,4-alpha-linked oligosaccharide from growing alpha-1,4-glucan chains and the subsequent attachment of the oligosaccharide to the alpha-1,6 position. The sequence is that of 1,4-alpha-glucan branching enzyme GlgB (glgB) from Butyrivibrio fibrisolvens.